The sequence spans 390 residues: NADH-quinone oxidoreductase subunit D (390 aa).

The protein belongs to the complex I 49 kDa subunit family. NDH-1 is composed of 14 different subunits. Subunits NuoB, C, D, E, F, and G constitute the peripheral sector of the complex.

It localises to the cell membrane. The catalysed reaction is a quinone + NADH + 5 H(+)(in) = a quinol + NAD(+) + 4 H(+)(out). In terms of biological role, NDH-1 shuttles electrons from NADH, via FMN and iron-sulfur (Fe-S) centers, to quinones in the respiratory chain. The immediate electron acceptor for the enzyme in this species is believed to be ubiquinone. Couples the redox reaction to proton translocation (for every two electrons transferred, four hydrogen ions are translocated across the cytoplasmic membrane), and thus conserves the redox energy in a proton gradient. This Wolbachia sp. subsp. Brugia malayi (strain TRS) protein is NADH-quinone oxidoreductase subunit D.